Reading from the N-terminus, the 198-residue chain is Myc target protein 1 homolog (198 aa).

Positions 52–72 (RRRASASISPRMPKSSSRRPR) match the Bipartite nuclear localization signal motif. Disordered regions lie at residues 58 to 83 (SISP…LNRS) and 172 to 198 (NNSL…FPDS). Residues 172–181 (NNSLRLGPST) are compositionally biased toward polar residues.

Belongs to the MYCT1 family.

It localises to the nucleus. Functionally, may regulate certain MYC target genes, MYC seems to be a direct upstream transcriptional activator. This chain is Myc target protein 1 homolog (myct1), found in Xenopus tropicalis (Western clawed frog).